Here is a 955-residue protein sequence, read N- to C-terminus: Protein translocase subunit SecA (955 aa).

Residues Gln-90, 108–112 (GEGKT), and Asp-509 contribute to the ATP site. The disordered stretch occupies residues 537–571 (EGHRPPVPLQRSGAEGGGGFAAKAAPASGPHGHAP). A compositionally biased stretch (low complexity) spans 557–571 (AAKAAPASGPHGHAP).

This sequence belongs to the SecA family. Monomer and homodimer. Part of the essential Sec protein translocation apparatus which comprises SecA, SecYEG and auxiliary proteins SecDF. Other proteins may also be involved.

It localises to the cell inner membrane. The protein resides in the cellular thylakoid membrane. The protein localises to the cytoplasm. The enzyme catalyses ATP + H2O + cellular proteinSide 1 = ADP + phosphate + cellular proteinSide 2.. Functionally, part of the Sec protein translocase complex. Interacts with the SecYEG preprotein conducting channel. Has a central role in coupling the hydrolysis of ATP to the transfer of proteins into and across the cell membrane, serving as an ATP-driven molecular motor driving the stepwise translocation of polypeptide chains across the membrane. Probably participates in protein translocation into and across both the cytoplasmic and thylakoid membranes in cyanobacterial cells. The sequence is that of Protein translocase subunit SecA from Synechococcus sp. (strain WH7803).